Consider the following 246-residue polypeptide: 1-(5-phosphoribosyl)-5-[(5-phosphoribosylamino)methylideneamino] imidazole-4-carboxamide isomerase (246 aa).

The active-site Proton acceptor is aspartate 8. The active-site Proton donor is aspartate 131.

This sequence belongs to the HisA/HisF family.

It localises to the cytoplasm. It carries out the reaction 1-(5-phospho-beta-D-ribosyl)-5-[(5-phospho-beta-D-ribosylamino)methylideneamino]imidazole-4-carboxamide = 5-[(5-phospho-1-deoxy-D-ribulos-1-ylimino)methylamino]-1-(5-phospho-beta-D-ribosyl)imidazole-4-carboxamide. It participates in amino-acid biosynthesis; L-histidine biosynthesis; L-histidine from 5-phospho-alpha-D-ribose 1-diphosphate: step 4/9. This chain is 1-(5-phosphoribosyl)-5-[(5-phosphoribosylamino)methylideneamino] imidazole-4-carboxamide isomerase, found in Lactococcus lactis subsp. cremoris (strain MG1363).